We begin with the raw amino-acid sequence, 174 residues long: Translationally-controlled tumor protein homolog 1 (174 aa).

The region spanning 1-174 (MRVFKDIVGY…FKDGLESVKY (174 aa)) is the TCTP domain.

It belongs to the TCTP family.

It is found in the cytoplasm. Involved in calcium binding and microtubule stabilization. This is Translationally-controlled tumor protein homolog 1 from Dictyostelium discoideum (Social amoeba).